Here is a 159-residue protein sequence, read N- to C-terminus: ATP synthase subunit b (159 aa).

Residues 7–27 (VIFMTIINFCILVAILKHFFW) form a helical membrane-spanning segment.

This sequence belongs to the ATPase B chain family. In terms of assembly, F-type ATPases have 2 components, F(1) - the catalytic core - and F(0) - the membrane proton channel. F(1) has five subunits: alpha(3), beta(3), gamma(1), delta(1), epsilon(1). F(0) has three main subunits: a(1), b(2) and c(10-14). The alpha and beta chains form an alternating ring which encloses part of the gamma chain. F(1) is attached to F(0) by a central stalk formed by the gamma and epsilon chains, while a peripheral stalk is formed by the delta and b chains.

The protein resides in the cell membrane. Functionally, f(1)F(0) ATP synthase produces ATP from ADP in the presence of a proton or sodium gradient. F-type ATPases consist of two structural domains, F(1) containing the extramembraneous catalytic core and F(0) containing the membrane proton channel, linked together by a central stalk and a peripheral stalk. During catalysis, ATP synthesis in the catalytic domain of F(1) is coupled via a rotary mechanism of the central stalk subunits to proton translocation. Its function is as follows. Component of the F(0) channel, it forms part of the peripheral stalk, linking F(1) to F(0). In Clostridium botulinum (strain Alaska E43 / Type E3), this protein is ATP synthase subunit b.